A 47-amino-acid polypeptide reads, in one-letter code: Large ribosomal subunit protein bL33A (47 aa).

This sequence belongs to the bacterial ribosomal protein bL33 family.

This Staphylococcus aureus (strain JH1) protein is Large ribosomal subunit protein bL33A.